We begin with the raw amino-acid sequence, 968 residues long: Leucine--tRNA ligase (968 aa).

Over residues 1–13 the composition is skewed to polar residues; that stretch reads MTETPTGTQSSRE. Residues 1–22 form a disordered region; sequence MTETPTGTQSSRETAADDTPRH. The 'HIGH' region motif lies at 75 to 86; that stretch reads PYPSGEGLHVGH. Residues 741-745 carry the 'KMSKS' region motif; that stretch reads KIGKS. ATP is bound at residue Lys-744.

The protein belongs to the class-I aminoacyl-tRNA synthetase family.

Its subcellular location is the cytoplasm. It catalyses the reaction tRNA(Leu) + L-leucine + ATP = L-leucyl-tRNA(Leu) + AMP + diphosphate. The polypeptide is Leucine--tRNA ligase (Mycolicibacterium vanbaalenii (strain DSM 7251 / JCM 13017 / BCRC 16820 / KCTC 9966 / NRRL B-24157 / PYR-1) (Mycobacterium vanbaalenii)).